The sequence spans 173 residues: Peptide methionine sulfoxide reductase MsrA (173 aa).

The active site involves Cys10.

This sequence belongs to the MsrA Met sulfoxide reductase family.

The enzyme catalyses L-methionyl-[protein] + [thioredoxin]-disulfide + H2O = L-methionyl-(S)-S-oxide-[protein] + [thioredoxin]-dithiol. It catalyses the reaction [thioredoxin]-disulfide + L-methionine + H2O = L-methionine (S)-S-oxide + [thioredoxin]-dithiol. Its function is as follows. Has an important function as a repair enzyme for proteins that have been inactivated by oxidation. Catalyzes the reversible oxidation-reduction of methionine sulfoxide in proteins to methionine. The chain is Peptide methionine sulfoxide reductase MsrA from Psychrobacter arcticus (strain DSM 17307 / VKM B-2377 / 273-4).